A 339-amino-acid polypeptide reads, in one-letter code: Phosphate acyltransferase (339 aa).

It belongs to the PlsX family. As to quaternary structure, homodimer. Probably interacts with PlsY.

The protein localises to the cytoplasm. The catalysed reaction is a fatty acyl-[ACP] + phosphate = an acyl phosphate + holo-[ACP]. Its pathway is lipid metabolism; phospholipid metabolism. Catalyzes the reversible formation of acyl-phosphate (acyl-PO(4)) from acyl-[acyl-carrier-protein] (acyl-ACP). This enzyme utilizes acyl-ACP as fatty acyl donor, but not acyl-CoA. The protein is Phosphate acyltransferase of Dechloromonas aromatica (strain RCB).